The following is a 95-amino-acid chain: Large ribosomal subunit protein uL23 (95 aa).

This sequence belongs to the universal ribosomal protein uL23 family. In terms of assembly, part of the 50S ribosomal subunit. Contacts protein L29, and trigger factor when it is bound to the ribosome.

Functionally, one of the early assembly proteins it binds 23S rRNA. One of the proteins that surrounds the polypeptide exit tunnel on the outside of the ribosome. Forms the main docking site for trigger factor binding to the ribosome. The protein is Large ribosomal subunit protein uL23 of Geobacillus kaustophilus (strain HTA426).